The following is a 1201-amino-acid chain: Transcription-repair-coupling factor (1201 aa).

The tract at residues 1–27 (MRLLITLGPSGSTHGHSLHTDAGRRRG) is disordered. One can recognise a Helicase ATP-binding domain in the interval 670–831 (DMQKPEPMDR…MSGVRDMSII (162 aa)). Residue 683–690 (GDVGYGKT) coordinates ATP. A DEEQ box motif is present at residues 784–787 (DEEQ). The 155-residue stretch at 852 to 1006 (VVKEAIEREV…GFSIASHDLE (155 aa)) folds into the Helicase C-terminal domain.

This sequence in the N-terminal section; belongs to the UvrB family. The protein in the C-terminal section; belongs to the helicase family. RecG subfamily.

It localises to the cytoplasm. Couples transcription and DNA repair by recognizing RNA polymerase (RNAP) stalled at DNA lesions. Mediates ATP-dependent release of RNAP and its truncated transcript from the DNA, and recruitment of nucleotide excision repair machinery to the damaged site. The protein is Transcription-repair-coupling factor of Myxococcus xanthus.